Consider the following 231-residue polypeptide: MNMSQKMAAEFLGTLWLVLGGCGSAVLAAAFPEVGIGLLGVSLAFGLTVLTMAFAIGHISGCHLNPAVSFGLWAGGRFPTSELLPYIIAQVAGGIAGAGVLYLIASGQEGFSLAAGFASNGFGEHSPGGYSMISVMICEIVMTLFFLLVILGSTDERAPKGFAPIAIGLCLTLIHLISIPISNTSVNPARSTGPALFVGDWAVSQLWLFWAAPIIGAILAGVIYRYFNAAK.

The next 2 helical transmembrane spans lie at 11-31 (FLGTLWLVLGGCGSAVLAAAF) and 36-56 (IGLLGVSLAFGLTVLTMAFAI). Positions 65–67 (NPA) match the NPA 1 motif. Transmembrane regions (helical) follow at residues 84 to 104 (LPYIIAQVAGGIAGAGVLYLI), 132 to 152 (MISVMICEIVMTLFFLLVILG), and 161 to 181 (GFAPIAIGLCLTLIHLISIPI). The short motif at 187–189 (NPA) is the NPA 2 element. A helical membrane pass occupies residues 203–223 (VSQLWLFWAAPIIGAILAGVI).

The protein belongs to the MIP/aquaporin (TC 1.A.8) family. Homotetramer.

It localises to the cell inner membrane. The catalysed reaction is H2O(in) = H2O(out). Channel that permits osmotically driven movement of water in both directions. It is involved in the osmoregulation and in the maintenance of cell turgor during volume expansion in rapidly growing cells. It mediates rapid entry or exit of water in response to abrupt changes in osmolarity. This Shewanella oneidensis (strain ATCC 700550 / JCM 31522 / CIP 106686 / LMG 19005 / NCIMB 14063 / MR-1) protein is Aquaporin Z.